A 421-amino-acid chain; its full sequence is Cell division protein FtsZ (421 aa).

GTP is bound by residues 26–30, 132–134, glutamate 163, arginine 167, and asparagine 211; these read GGGGN and GTG.

The protein belongs to the FtsZ family. In terms of assembly, homodimer. Polymerizes to form a dynamic ring structure in a strictly GTP-dependent manner. Interacts directly with several other division proteins.

It is found in the cytoplasm. Its function is as follows. Essential cell division protein that forms a contractile ring structure (Z ring) at the future cell division site. The regulation of the ring assembly controls the timing and the location of cell division. One of the functions of the FtsZ ring is to recruit other cell division proteins to the septum to produce a new cell wall between the dividing cells. Binds GTP and shows GTPase activity. In Haemophilus influenzae (strain ATCC 51907 / DSM 11121 / KW20 / Rd), this protein is Cell division protein FtsZ.